A 573-amino-acid chain; its full sequence is DNA ligase (573 aa).

Glutamate 250 lines the ATP pocket. Lysine 252 (N6-AMP-lysine intermediate) is an active-site residue. Residues arginine 257, arginine 272, glutamate 301, phenylalanine 342, arginine 432, and lysine 438 each coordinate ATP.

Belongs to the ATP-dependent DNA ligase family. The cofactor is Mg(2+).

It carries out the reaction ATP + (deoxyribonucleotide)n-3'-hydroxyl + 5'-phospho-(deoxyribonucleotide)m = (deoxyribonucleotide)n+m + AMP + diphosphate.. Its function is as follows. DNA ligase that seals nicks in double-stranded DNA during DNA replication, DNA recombination and DNA repair. This chain is DNA ligase, found in Methanococcus vannielii (strain ATCC 35089 / DSM 1224 / JCM 13029 / OCM 148 / SB).